A 253-amino-acid chain; its full sequence is Tetraspanin-11 (253 aa).

A run of 3 helical transmembrane segments spans residues 19 to 39 (LLFV…AVGI), 63 to 83 (ILIF…GAIL), and 93 to 113 (YFCL…LAHV). A glycan (N-linked (GlcNAc...) asparagine) is linked at N127. The chain crosses the membrane as a helical span at residues 220–240 (LLLMGAVGIGVACLQICGMVL).

This sequence belongs to the tetraspanin (TM4SF) family.

It localises to the membrane. In Homo sapiens (Human), this protein is Tetraspanin-11 (TSPAN11).